Reading from the N-terminus, the 542-residue chain is Katanin p60 ATPase-containing subunit A-like 2 (542 aa).

In terms of domain architecture, LisH spans 25-57 (RRKNLLILIMHYLLQEGYMDSANSLEQETKISL). Disordered stretches follow at residues 94-126 (LDHDSRVQSKPRSAGKLRRAGSNSTQGLPRIAQ) and 142-168 (HAHQKALSRENSKQENGGNSPREASEI). Polar residues predominate over residues 114 to 126 (GSNSTQGLPRIAQ). 298-305 (GPPGTGKT) contacts ATP.

Belongs to the AAA ATPase family. Katanin p60 subunit A1 subfamily. A-like 2 sub-subfamily.

The protein resides in the cytoplasm. The protein localises to the cytoskeleton. Its subcellular location is the spindle. It is found in the spindle pole. It catalyses the reaction n ATP + n H2O + a microtubule = n ADP + n phosphate + (n+1) alpha/beta tubulin heterodimers.. Its function is as follows. Severs microtubules in vitro in an ATP-dependent manner. This activity may promote rapid reorganization of cellular microtubule arrays. The protein is Katanin p60 ATPase-containing subunit A-like 2 (katnal2) of Xenopus tropicalis (Western clawed frog).